The primary structure comprises 336 residues: Cell division protein ZipA (336 aa).

The Periplasmic portion of the chain corresponds to Met-1–Glu-2. The chain crosses the membrane as a helical span at residues Leu-3 to Leu-23. Over Trp-24 to Ser-336 the chain is Cytoplasmic. The segment at Ser-57 to Asp-76 is disordered. A compositionally biased stretch (polar residues) spans Asn-59–His-70.

Belongs to the ZipA family. As to quaternary structure, interacts with FtsZ via their C-terminal domains.

It is found in the cell inner membrane. In terms of biological role, essential cell division protein that stabilizes the FtsZ protofilaments by cross-linking them and that serves as a cytoplasmic membrane anchor for the Z ring. Also required for the recruitment to the septal ring of downstream cell division proteins. The chain is Cell division protein ZipA from Actinobacillus pleuropneumoniae serotype 7 (strain AP76).